The primary structure comprises 233 residues: Esterase FUS5 (233 aa).

Catalysis depends on charge relay system residues Ser-105, Asp-159, and His-187.

Belongs to the LovG family.

Esterase; part of the gene cluster that mediates the biosynthesis of the mycotoxin fusarin C. Within the cluster, FUS1, FUS2, FUS8 and FUS9 are sufficient for fusarin production. The other FUS cluster members are not essential for fusarin C biosynthesis. The sequence is that of Esterase FUS5 from Gibberella fujikuroi (strain CBS 195.34 / IMI 58289 / NRRL A-6831) (Bakanae and foot rot disease fungus).